Consider the following 360-residue polypeptide: Peptide chain release factor 1 (360 aa).

Glutamine 237 carries the N5-methylglutamine modification.

The protein belongs to the prokaryotic/mitochondrial release factor family. Post-translationally, methylated by PrmC. Methylation increases the termination efficiency of RF1.

The protein resides in the cytoplasm. Peptide chain release factor 1 directs the termination of translation in response to the peptide chain termination codons UAG and UAA. The chain is Peptide chain release factor 1 from Saccharophagus degradans (strain 2-40 / ATCC 43961 / DSM 17024).